A 466-amino-acid polypeptide reads, in one-letter code: IQ domain-containing protein C (466 aa).

The IQ domain maps to 6–35; it reads LVRKVSALQACVRGFLVRRQFQSLRAEYEA. Disordered stretches follow at residues 105 to 157, 214 to 233, 238 to 310, and 394 to 466; these read KSGE…PHSQ, EQACERDQSQPSAPLEDQSY, TGEL…QTFG, and VLDL…EPPG. A compositionally biased stretch (basic and acidic residues) spans 132–153; it reads PSQEKTRDTTRMENPEATDQRL. The span at 282-293 shows a compositional bias: polar residues; sequence GPPSSIPSNSQA. Over residues 297–306 the composition is skewed to basic and acidic residues; sequence RLTKGPDDGR. At Ser438 the chain carries Phosphoserine.

The chain is IQ domain-containing protein C (IQCC) from Homo sapiens (Human).